A 118-amino-acid polypeptide reads, in one-letter code: Large ribosomal subunit protein uL24 (118 aa).

It belongs to the universal ribosomal protein uL24 family. Part of the 50S ribosomal subunit.

Functionally, one of two assembly initiator proteins, it binds directly to the 5'-end of the 23S rRNA, where it nucleates assembly of the 50S subunit. In terms of biological role, one of the proteins that surrounds the polypeptide exit tunnel on the outside of the subunit. The protein is Large ribosomal subunit protein uL24 of Synechococcus sp. (strain WH7803).